The chain runs to 188 residues: Elongation factor P (188 aa).

K34 is modified (N6-(3,6-diaminohexanoyl)-5-hydroxylysine).

The protein belongs to the elongation factor P family. May be beta-lysylated on the epsilon-amino group of Lys-34 by the combined action of EpmA and EpmB, and then hydroxylated on the C5 position of the same residue by EpmC (if this protein is present). Lysylation is critical for the stimulatory effect of EF-P on peptide-bond formation. The lysylation moiety may extend toward the peptidyltransferase center and stabilize the terminal 3-CCA end of the tRNA. Hydroxylation of the C5 position on Lys-34 may allow additional potential stabilizing hydrogen-bond interactions with the P-tRNA.

The protein resides in the cytoplasm. It functions in the pathway protein biosynthesis; polypeptide chain elongation. Involved in peptide bond synthesis. Alleviates ribosome stalling that occurs when 3 or more consecutive Pro residues or the sequence PPG is present in a protein, possibly by augmenting the peptidyl transferase activity of the ribosome. Modification of Lys-34 is required for alleviation. The sequence is that of Elongation factor P from Erwinia tasmaniensis (strain DSM 17950 / CFBP 7177 / CIP 109463 / NCPPB 4357 / Et1/99).